Here is a 190-residue protein sequence, read N- to C-terminus: Peptide methionine sulfoxide reductase A2-2 (190 aa).

The tract at residues 1-20 (MSNDTGADGGAANPDLGPDA) is disordered. A compositionally biased stretch (low complexity) spans 10–20 (GAANPDLGPDA).

This sequence belongs to the MsrA Met sulfoxide reductase family.

It is found in the cytoplasm. The protein resides in the cytosol. It catalyses the reaction L-methionyl-[protein] + [thioredoxin]-disulfide + H2O = L-methionyl-(S)-S-oxide-[protein] + [thioredoxin]-dithiol. The enzyme catalyses [thioredoxin]-disulfide + L-methionine + H2O = L-methionine (S)-S-oxide + [thioredoxin]-dithiol. Its function is as follows. Catalyzes the reduction of methionine sulfoxide (MetSO) to methionine in proteins. Plays a protective role against oxidative stress by restoring activity to proteins that have been inactivated by methionine oxidation. MSRA family specifically reduces the MetSO S-enantiomer. The polypeptide is Peptide methionine sulfoxide reductase A2-2 (MSRA2-2) (Oryza sativa subsp. japonica (Rice)).